Consider the following 595-residue polypeptide: Alpha-1,3-galactosidase B (595 aa).

Positions Met1 to Ala22 are cleaved as a signal peptide. PbH1 repeat units lie at residues Thr432 to Thr454, Pro455 to Gly477, and Cys488 to Asp541.

Belongs to the glycosyl hydrolase 110 family. B subfamily.

The catalysed reaction is Hydrolysis of terminal, non-reducing branched (1-&gt;3)-alpha-D-galactosidic residues, producing free D-galactose.. It carries out the reaction Hydrolysis of terminal, non-reducing linear (1-&gt;3)-alpha-D-galactosidic residues, producing free D-galactose.. The enzyme catalyses Hydrolysis of terminal, non-reducing alpha-D-galactose residues in alpha-D-galactosides, including galactose oligosaccharides, galactomannans and galactolipids.. Functionally, alpha-galactosidase. Removes both branched alpha-1,3-linked galactose residues of blood group B antigens and linear alpha-1,3-linked galactose structures. The protein is Alpha-1,3-galactosidase B (glaB) of Bacteroides fragilis (strain YCH46).